A 177-amino-acid polypeptide reads, in one-letter code: Transcriptional repressor NrdR (177 aa).

A zinc finger spans residues 3–34 (CPYCGGSETQVKDSRPSEDGAAIRRRRVCPDC). Residues 49–139 (VVVLKRSGKR…VYKNFREARD (91 aa)) form the ATP-cone domain. The segment at 148–177 (SDGMPVPAAAPEAEGDPEPEASGRRRAGRP) is disordered.

It belongs to the NrdR family. Requires Zn(2+) as cofactor.

Functionally, negatively regulates transcription of bacterial ribonucleotide reductase nrd genes and operons by binding to NrdR-boxes. The chain is Transcriptional repressor NrdR from Methylobacterium radiotolerans (strain ATCC 27329 / DSM 1819 / JCM 2831 / NBRC 15690 / NCIMB 10815 / 0-1).